The chain runs to 124 residues: Ribonuclease pancreatic (124 aa).

The segment covering 1–13 (KESAAAKFERQHI) has biased composition (basic and acidic residues). Positions 1-23 (KESAAAKFERQHIDSSTSSVSSS) are disordered. Residues K7 and R10 each contribute to the substrate site. The active-site Proton acceptor is the H12. 4 disulfides stabilise this stretch: C26–C84, C40–C95, C58–C110, and C65–C72. An N-linked (GlcNAc...) asparagine glycan is attached at N34. Substrate-binding positions include 41 to 45 (KPVNT), K66, and R85. Catalysis depends on H119, which acts as the Proton donor.

The protein belongs to the pancreatic ribonuclease family. In terms of assembly, monomer. Interacts with and forms tight 1:1 complexes with RNH1. Dimerization of two such complexes may occur. Interaction with RNH1 inhibits this protein. Pancreas.

It is found in the secreted. It catalyses the reaction an [RNA] containing cytidine + H2O = an [RNA]-3'-cytidine-3'-phosphate + a 5'-hydroxy-ribonucleotide-3'-[RNA].. It carries out the reaction an [RNA] containing uridine + H2O = an [RNA]-3'-uridine-3'-phosphate + a 5'-hydroxy-ribonucleotide-3'-[RNA].. Endonuclease that catalyzes the cleavage of RNA on the 3' side of pyrimidine nucleotides. Acts on single-stranded and double-stranded RNA. In Giraffa camelopardalis (Giraffe), this protein is Ribonuclease pancreatic (RNASE1).